Reading from the N-terminus, the 381-residue chain is Arf-GAP with dual PH domain-containing protein 2 (381 aa).

The Arf-GAP domain maps to 9–131; that stretch reads KRLLELLRAP…FMADGETISL (123 aa). A C4-type zinc finger spans residues 25–48; it reads CADCGAADPDWASYKLGIFICLNC. PH domains follow at residues 132 to 233 and 255 to 361; these read PGNR…AARL and NYLK…GVLS.

As to expression, highly expressed in placenta, spleen, kidney, skeletal muscle and adrenal gland. Weakly expressed in thyroid, liver, heart, lung, small intestine, peripheral blood leukocytes. Not detected in spinal cord, brain, stomach, trachea, colon, lymph node and bone marrow.

The protein resides in the cytoplasm. It is found in the cell membrane. GTPase-activating protein for the ADP ribosylation factor family (Potential). Binds phosphatidylinositol 3,4,5-trisphosphate (PtdInsP3) and inositol 1,3,4,5-tetrakisphosphate (InsP4). Possesses a stoichiometry of two binding sites for InsP4 with identical affinity. The sequence is that of Arf-GAP with dual PH domain-containing protein 2 (ADAP2) from Homo sapiens (Human).